Consider the following 385-residue polypeptide: S-adenosylmethionine synthase (385 aa).

ATP is bound at residue histidine 15. Position 17 (aspartate 17) interacts with Mg(2+). Residue glutamate 43 coordinates K(+). L-methionine-binding residues include glutamate 56 and glutamine 99. Residues 99–109 are flexible loop; sequence QSPDINQGVDR. ATP-binding positions include 164-166, 230-231, aspartate 239, 245-246, alanine 262, and lysine 266; these read DAK, RF, and RK. An L-methionine-binding site is contributed by aspartate 239. Lysine 270 lines the L-methionine pocket.

The protein belongs to the AdoMet synthase family. In terms of assembly, homotetramer; dimer of dimers. The cofactor is Mg(2+). K(+) is required as a cofactor.

Its subcellular location is the cytoplasm. The catalysed reaction is L-methionine + ATP + H2O = S-adenosyl-L-methionine + phosphate + diphosphate. It functions in the pathway amino-acid biosynthesis; S-adenosyl-L-methionine biosynthesis; S-adenosyl-L-methionine from L-methionine: step 1/1. In terms of biological role, catalyzes the formation of S-adenosylmethionine (AdoMet) from methionine and ATP. The overall synthetic reaction is composed of two sequential steps, AdoMet formation and the subsequent tripolyphosphate hydrolysis which occurs prior to release of AdoMet from the enzyme. This is S-adenosylmethionine synthase from Hamiltonella defensa subsp. Acyrthosiphon pisum (strain 5AT).